A 349-amino-acid polypeptide reads, in one-letter code: Magnesium-protoporphyrin IX monomethyl ester [oxidative] cyclase (349 aa).

It belongs to the AcsF family. Fe cation serves as cofactor.

The protein localises to the plastid. It is found in the chloroplast. The catalysed reaction is Mg-protoporphyrin IX 13-monomethyl ester + 3 NADPH + 3 O2 + 2 H(+) = 3,8-divinyl protochlorophyllide a + 3 NADP(+) + 5 H2O. It participates in porphyrin-containing compound metabolism; chlorophyll biosynthesis (light-independent). Functionally, catalyzes the formation of the isocyclic ring in chlorophyll biosynthesis. Mediates the cyclase reaction, which results in the formation of divinylprotochlorophyllide (Pchlide) characteristic of all chlorophylls from magnesium-protoporphyrin IX 13-monomethyl ester (MgPMME). This is Magnesium-protoporphyrin IX monomethyl ester [oxidative] cyclase from Pyropia yezoensis (Susabi-nori).